The sequence spans 131 residues: UPF0102 protein RALTA_A3032 (131 aa).

A compositionally biased stretch (polar residues) spans 1–12 (MMRSFKSTQEPS). Positions 1-21 (MMRSFKSTQEPSRQARGAQAE) are disordered.

Belongs to the UPF0102 family.

This is UPF0102 protein RALTA_A3032 from Cupriavidus taiwanensis (strain DSM 17343 / BCRC 17206 / CCUG 44338 / CIP 107171 / LMG 19424 / R1) (Ralstonia taiwanensis (strain LMG 19424)).